Here is a 237-residue protein sequence, read N- to C-terminus: UPF0174 protein YaaW (237 aa).

Belongs to the UPF0174 family.

This chain is UPF0174 protein YaaW (yaaW), found in Escherichia coli (strain K12).